We begin with the raw amino-acid sequence, 81 residues long: Centromere protein X (81 aa).

M1 carries the post-translational modification N-acetylmethionine.

Belongs to the CENP-X/MHF2 family. As to quaternary structure, heterodimer with CENPX, sometimes called MHF; this interaction stabilizes both partners. MHF heterodimers can assemble to form tetrameric structures. MHF also coassemble with CENPT-CENPW heterodimers at centromeres to form the tetrameric CENP-T-W-S-X complex. Forms a discrete complex with FANCM and CENPX, called FANCM-MHF; this interaction, probably mediated by direct binding between CENPS and FANCM, leads to synergistic activation of double-stranded DNA binding and strongly stimulates FANCM-mediated DNA remodeling. Recruited by FANCM to the Fanconi anemia (FA) core complex, which consists of CENPS, CENPX, FANCA, FANCB, FANCC, FANCE, FANCF, FANCG, FANCL, FANCM, FAAP24 and FAAP100. The FA core complex associates with Bloom syndrome (BLM) complex, which consists of at least BLM, DNA topoisomerase 3-alpha (TOP3A), RMI1/BLAP75, RPA1/RPA70 and RPA2/RPA32. The super complex between FA and BLM is called BRAFT.

The protein localises to the nucleus. It is found in the chromosome. The protein resides in the centromere. Its subcellular location is the kinetochore. In terms of biological role, DNA-binding component of the Fanconi anemia (FA) core complex. Required for the normal activation of the FA pathway, leading to monoubiquitination of the FANCI-FANCD2 complex in response to DNA damage, cellular resistance to DNA cross-linking drugs, and prevention of chromosomal breakage. In complex with CENPS (MHF heterodimer), crucial cofactor for FANCM in both binding and ATP-dependent remodeling of DNA. Stabilizes FANCM. In complex with CENPS and FANCM (but not other FANC proteins), rapidly recruited to blocked forks and promotes gene conversion at blocked replication forks. In complex with CENPS, CENPT and CENPW (CENP-T-W-S-X heterotetramer), involved in the formation of a functional kinetochore outer plate, which is essential for kinetochore-microtubule attachment and faithful mitotic progression. As a component of MHF and CENP-T-W-S-X complexes, binds DNA and bends it to form a nucleosome-like structure. DNA-binding function is fulfilled in the presence of CENPS, with the following preference for DNA substates: Holliday junction &gt; double-stranded &gt; splay arm &gt; single-stranded. Does not bind DNA on its own. The polypeptide is Centromere protein X (CENPX) (Pongo abelii (Sumatran orangutan)).